Consider the following 245-residue polypeptide: uncharacterized protein (245 aa).

The first 20 residues, 1 to 20 (MIKQTIVALLLSVGASSVFA), serve as a signal peptide directing secretion.

To E.coli YmcB.

This is an uncharacterized protein from Escherichia coli (strain K12).